The chain runs to 195 residues: Probable GTP-binding protein EngB (195 aa).

In terms of domain architecture, EngB-type G spans 24 to 195 (DWPEIALAGR…EAWTAILKYL (172 aa)). GTP is bound by residues 32-39 (GRSNVGKS), 59-63 (GKTQL), 77-80 (DVPG), 144-147 (TKAD), and 176-178 (FSS). Mg(2+) is bound by residues Ser39 and Thr61.

It belongs to the TRAFAC class TrmE-Era-EngA-EngB-Septin-like GTPase superfamily. EngB GTPase family. Mg(2+) serves as cofactor.

Necessary for normal cell division and for the maintenance of normal septation. This Lactococcus lactis subsp. cremoris (strain MG1363) protein is Probable GTP-binding protein EngB.